The primary structure comprises 575 residues: Adenine deaminase 1 (575 aa).

Belongs to the metallo-dependent hydrolases superfamily. Adenine deaminase family. It depends on Mn(2+) as a cofactor.

The catalysed reaction is adenine + H2O + H(+) = hypoxanthine + NH4(+). The protein is Adenine deaminase 1 of Agrobacterium fabrum (strain C58 / ATCC 33970) (Agrobacterium tumefaciens (strain C58)).